The chain runs to 468 residues: Glutamine synthetase (468 aa).

The GS beta-grasp domain occupies 13-97 (NEVKFVDLRF…IRCDILEPAT (85 aa)). Residues 105–468 (PRSIAKRAED…PVEFELYYSV (364 aa)) enclose the GS catalytic domain. Residues glutamate 130 and glutamate 132 each contribute to the Mg(2+) site. Glutamate 208 contacts ATP. Residues glutamate 213 and glutamate 220 each coordinate Mg(2+). L-glutamate-binding positions include 264–265 (NG) and glycine 265. Histidine 269 is a binding site for Mg(2+). ATP contacts are provided by residues 271–273 (HQS) and serine 273. L-glutamate-binding residues include arginine 321, glutamate 327, and arginine 339. Residues arginine 339, arginine 344, and lysine 352 each contribute to the ATP site. Position 357 (glutamate 357) interacts with Mg(2+). Residue arginine 359 coordinates L-glutamate. Tyrosine 397 is modified (O-AMP-tyrosine).

Belongs to the glutamine synthetase family. In terms of assembly, oligomer of 12 subunits arranged in the form of two hexameric ring. Mg(2+) is required as a cofactor.

It localises to the cytoplasm. It carries out the reaction L-glutamate + NH4(+) + ATP = L-glutamine + ADP + phosphate + H(+). The activity of this enzyme could be controlled by adenylation under conditions of abundant glutamine. Its function is as follows. Catalyzes the ATP-dependent biosynthesis of glutamine from glutamate and ammonia. This chain is Glutamine synthetase, found in Vibrio alginolyticus.